Here is a 286-residue protein sequence, read N- to C-terminus: MANIKVAVVQLSFNDNEAENLAKLESKIIQAAKNGAKIILTPELPSYLYFCKKQNSKYFDLAKTIDESPIVKLYKLLAHKYNIVLPASFFERDGNACYNSIAMIDADGSIMGVYRKAHIPDGIGYQEKYYFSPGSAGFKVWDTKYAKVGVGICWDQWFPEAARVMALKGAEILLYPTAIGSEPHLPDYDSKDHWQRVMQGHAAANMLPVLASNRYATEANDDITATYYGSSFITDHTGDKIAEADRSGDDILYATFDFAELQQQRFYWGLFRDRRPELYDEIVRKY.

The CN hydrolase domain occupies 4–258 (IKVAVVQLSF…DDILYATFDF (255 aa)). E43 (proton acceptor) is an active-site residue. The active site involves K116. C153 functions as the Nucleophile in the catalytic mechanism.

It belongs to the carbon-nitrogen hydrolase superfamily.

The enzyme catalyses L-citrulline + H2O + 2 H(+) = L-ornithine + NH4(+) + CO2. Catalyzes the degradation of citrulline into ornithine, carbon dioxide and ammonia. Contributes to intramacrophage survival, in vivo growth and pathogenesis. The chain is Citrullinase from Francisella tularensis subsp. tularensis (strain SCHU S4 / Schu 4).